The primary structure comprises 176 residues: 3-hydroxydecanoyl-[acyl-carrier-protein] dehydratase (176 aa).

His75 is a catalytic residue.

It belongs to the thioester dehydratase family. FabA subfamily. Homodimer.

The protein localises to the cytoplasm. The enzyme catalyses a (3R)-hydroxyacyl-[ACP] = a (2E)-enoyl-[ACP] + H2O. It catalyses the reaction (3R)-hydroxydecanoyl-[ACP] = (2E)-decenoyl-[ACP] + H2O. The catalysed reaction is (2E)-decenoyl-[ACP] = (3Z)-decenoyl-[ACP]. Its pathway is lipid metabolism; fatty acid biosynthesis. Functionally, necessary for the introduction of cis unsaturation into fatty acids. Catalyzes the dehydration of (3R)-3-hydroxydecanoyl-ACP to E-(2)-decenoyl-ACP and then its isomerization to Z-(3)-decenoyl-ACP. Can catalyze the dehydratase reaction for beta-hydroxyacyl-ACPs with saturated chain lengths up to 16:0, being most active on intermediate chain length. This Haemophilus ducreyi (strain 35000HP / ATCC 700724) protein is 3-hydroxydecanoyl-[acyl-carrier-protein] dehydratase.